We begin with the raw amino-acid sequence, 467 residues long: Uronate isomerase (467 aa).

The protein belongs to the metallo-dependent hydrolases superfamily. Uronate isomerase family.

The catalysed reaction is D-glucuronate = D-fructuronate. The enzyme catalyses aldehydo-D-galacturonate = keto-D-tagaturonate. It functions in the pathway carbohydrate metabolism; pentose and glucuronate interconversion. The polypeptide is Uronate isomerase (Haemophilus influenzae (strain PittGG)).